Consider the following 389-residue polypeptide: (+)-bicyclogermacrene synthase TS4 (389 aa).

Residues D136, E140, H284, G288, and D292 each contribute to the Mg(2+) site. A DDxx(x)D/E motif motif is present at residues 136–140; sequence DEVCE. The short motif at 284-292 is the NDxxSxxxD/E motif element; the sequence is HDFIGLQKD.

The protein belongs to the terpene synthase family.

The enzyme catalyses (2E,6E)-farnesyl diphosphate = bicyclogermacrene + diphosphate. Catalyzes the cyclization of trans,trans-farnesyl diphosphate (FPP) to the bicyclic sesquiterpene bicyclogermacrene. This chain is (+)-bicyclogermacrene synthase TS4, found in Penicillium expansum (Blue mold rot fungus).